The following is a 132-amino-acid chain: MAMTDPIADMLTRIRNAGLAKHQKCDMPASNVKLAIVNVLKELGYIKNFKQISDDKQGILRIYLKFDNENKHIIHAIDRVSTPGCRVYVGKDEIPVVKNGLGNAILSTSKGVMHDAAAREAQLGGEVLCSVW.

The protein belongs to the universal ribosomal protein uS8 family. Part of the 30S ribosomal subunit. Contacts proteins S5 and S12.

Its function is as follows. One of the primary rRNA binding proteins, it binds directly to 16S rRNA central domain where it helps coordinate assembly of the platform of the 30S subunit. This is Small ribosomal subunit protein uS8 from Syntrophotalea carbinolica (strain DSM 2380 / NBRC 103641 / GraBd1) (Pelobacter carbinolicus).